The sequence spans 152 residues: Ninjurin-1 (152 aa).

Methionine 1 bears the N-acetylmethionine mark. Residues methionine 1 to proline 26 are disordered. Residues methionine 1–valine 78 lie on the Extracellular side of the membrane. Residues serine 21 and serine 25 each carry the phosphoserine modification. The interval proline 26–asparagine 37 is N-terminal adhesion motif. The segment at histidine 40–glutamate 69 is required to induce plasma membrane rupture. The segment at lysine 44–alanine 55 is helix alpha1. Residues methionine 58–phenylalanine 74 form a helix alpha2 region. Asparagine 60 carries an N-linked (GlcNAc...) asparagine glycan. A helical membrane pass occupies residues proline 79–lysine 103. The Cytoplasmic portion of the chain corresponds to tyrosine 104–alanine 113. Residues lysine 114–alanine 138 traverse the membrane as a helical segment. Topologically, residues phenylalanine 139–glutamine 152 are extracellular.

The protein belongs to the ninjurin family. In terms of assembly, homodimer; in absence of death stimuli, forms an inactive homodimer. Homooligomer; in response to death stimuli, homooligomerizes into long, highly branched filaments and large, ring-shaped structures in the membrane. Post-translationally, cleaved by MMP9 protease to generate the Secreted ninjurin-1 form. N-linked glycosylation is required for homooligomerization. As to expression, widely expressed in both adult and embryonic tissues, primarily those of epithelial origin.

The protein resides in the cell membrane. It is found in the synaptic cell membrane. The protein localises to the secreted. In response to death stimuli, homooligomerizes and disrupts membrane integrity by introducing the hydrophilic faces of alpha1 and alpha2 helices into the hydrophobic membrane. Homooligomerization and ability to mediate plasma membrane rupture is inhibited by glycine; it is unclear whether glycine directly or indirectly inhibits homooligomerization. In normal conditions, NINJ1 is autoinhibited via formation of a homodimer: in the inactive homodimer, the alpha1 and alpha2 helices (residues 44-74) form a single transmembrane region without a kink, in which hydrophilic faces of alpha1 and alpha2 helices are sequestered. Functionally, effector of various programmed cell death, such as pyroptosis and necroptosis, which mediates plasma membrane rupture (cytolysis). Oligomerizes in response to death stimuli and forms ring-like structures on the plasma membrane: acts by cutting and shedding membrane disks, like a cookie cutter, leading to membrane damage and loss that cannot be repaired by the cell. Plasma membrane rupture leads to release intracellular molecules named damage-associated molecular patterns (DAMPs) that propagate the inflammatory response. Mechanistically, mediates plasma membrane rupture by introducing hydrophilic faces of 2 alpha helices into the hydrophobic membrane. Induces plasma membrane rupture downstream of Gasdermin (GSDMA, GSDMB, GSDMC, GSDMD, or GSDME) or MLKL during pyroptosis or necroptosis, respectively. Acts as an effector of PANoptosis downstream of CASP1, CASP4, CASP8 and RIPK3. Also induces plasma membrane rupture in response to cell swelling caused by osmotic stress and ferroptosis downstream of lipid peroxidation. Acts as a regulator of Toll-like receptor 4 (TLR4) signaling triggered by lipopolysaccharide (LPS) during systemic inflammation; directly binds LPS. Involved in leukocyte migration during inflammation by promoting transendothelial migration of macrophages via homotypic binding. Promotes the migration of monocytes across the brain endothelium to central nervous system inflammatory lesions. Also acts as a homophilic transmembrane adhesion molecule involved in various processes such as axonal growth, cell chemotaxis and angiogenesis. Promotes cell adhesion by mediating homophilic interactions via its extracellular N-terminal adhesion motif (N-NAM). Involved in the progression of the inflammatory stress by promoting cell-to-cell interactions between immune cells and endothelial cells. Plays a role in nerve regeneration by promoting maturation of Schwann cells. Acts as a regulator of angiogenesis. Promotes the formation of new vessels by mediating the interaction between capillary pericyte cells and endothelial cells. Promotes osteoclasts development by enhancing the survival of prefusion osteoclasts. Also involved in striated muscle growth and differentiation. In terms of biological role, secreted form generated by cleavage, which has chemotactic activity. Acts as an anti-inflammatory mediator by promoting monocyte recruitment, thereby ameliorating atherosclerosis. The polypeptide is Ninjurin-1 (Homo sapiens (Human)).